The sequence spans 144 residues: Glutamyl-tRNA(Gln) amidotransferase subunit C, mitochondrial (144 aa).

Residues M1 to F17 constitute a mitochondrion transit peptide.

The protein belongs to the GatC family. As to quaternary structure, subunit of the heterotrimeric GatCAB amidotransferase (AdT) complex, composed of A, B and C subunits.

The protein localises to the mitochondrion. The enzyme catalyses L-glutamyl-tRNA(Gln) + L-glutamine + ATP + H2O = L-glutaminyl-tRNA(Gln) + L-glutamate + ADP + phosphate + H(+). Functionally, allows the formation of correctly charged Gln-tRNA(Gln) through the transamidation of misacylated Glu-tRNA(Gln) in the mitochondria. The reaction takes place in the presence of glutamine and ATP through an activated gamma-phospho-Glu-tRNA(Gln). This is Glutamyl-tRNA(Gln) amidotransferase subunit C, mitochondrial from Ixodes scapularis (Black-legged tick).